Here is a 541-residue protein sequence, read N- to C-terminus: NEDD8-activating enzyme E1 regulatory subunit (541 aa).

The protein belongs to the ubiquitin-activating E1 family. ULA1 subfamily. As to quaternary structure, heterodimer of uba-3 and ula-1. The complex binds NEDD8 and ubc-12.

Its pathway is protein modification; protein neddylation. In terms of biological role, regulatory subunit of the dimeric uba-3-ula-1 E1 enzyme. E1 activates NEDD8 by first adenylating its C-terminal glycine residue with ATP, thereafter linking this residue to the side chain of the catalytic cysteine, yielding a NEDD8-rfl-1 (uba-3) thioester and free AMP. E1 finally transfers NEDD8 to the catalytic cysteine of ubc-12. Required for rfl-1 (uba-3) nuclear localization during early embryonic development. This chain is NEDD8-activating enzyme E1 regulatory subunit (ula-1), found in Caenorhabditis elegans.